A 439-amino-acid polypeptide reads, in one-letter code: Xylose isomerase (439 aa).

Catalysis depends on residues histidine 103 and aspartate 106. The Mg(2+) site is built by glutamate 234, glutamate 270, histidine 273, aspartate 298, aspartate 309, aspartate 311, and aspartate 341.

Belongs to the xylose isomerase family. Homotetramer. It depends on Mg(2+) as a cofactor.

Its subcellular location is the cytoplasm. The enzyme catalyses alpha-D-xylose = alpha-D-xylulofuranose. The polypeptide is Xylose isomerase (Bacteroides fragilis (strain YCH46)).